The following is a 318-amino-acid chain: Putative HTH-type transcriptional regulatory protein MJ1164 (318 aa).

Residues 131-189 (LKEVREAMGISVGKLAEVAGVSRKAIYKYETQMANPSVDVALKIEEFLDVPLVKGIDLF) enclose the HTH cro/C1-type domain. A DNA-binding region (H-T-H motif) is located at residues 142-161 (VGKLAEVAGVSRKAIYKYET).

This chain is Putative HTH-type transcriptional regulatory protein MJ1164, found in Methanocaldococcus jannaschii (strain ATCC 43067 / DSM 2661 / JAL-1 / JCM 10045 / NBRC 100440) (Methanococcus jannaschii).